A 347-amino-acid polypeptide reads, in one-letter code: NADH-ubiquinone oxidoreductase chain 2 (347 aa).

The next 9 membrane-spanning stretches (helical) occupy residues 3-23 (PLAL…TMMS), 59-79 (YFMT…INLM), 93-115 (VASN…HFWV), 150-170 (NTNL…WGGL), 178-198 (ILAY…PFNP), 200-220 (LTLL…MILA), 240-260 (MTIM…LSGF), 274-294 (NSII…YFYT), and 326-346 (LPTL…ISML).

It belongs to the complex I subunit 2 family. In terms of assembly, core subunit of respiratory chain NADH dehydrogenase (Complex I) which is composed of 45 different subunits. Interacts with TMEM242.

The protein resides in the mitochondrion inner membrane. It carries out the reaction a ubiquinone + NADH + 5 H(+)(in) = a ubiquinol + NAD(+) + 4 H(+)(out). Functionally, core subunit of the mitochondrial membrane respiratory chain NADH dehydrogenase (Complex I) which catalyzes electron transfer from NADH through the respiratory chain, using ubiquinone as an electron acceptor. Essential for the catalytic activity and assembly of complex I. This chain is NADH-ubiquinone oxidoreductase chain 2, found in Elephas maximus (Indian elephant).